Here is a 705-residue protein sequence, read N- to C-terminus: Polyribonucleotide nucleotidyltransferase (705 aa).

Mg(2+)-binding residues include Asp-486 and Asp-492. One can recognise a KH domain in the interval 553-612 (PRIYKIKINPEKIKDVIGKGGSVIRMLTEKTKSSIEIEDDGTVKVISTDIKNAQCALKKI). The S1 motif domain maps to 622 to 690 (NKIYVAKITR…RYGRIRLSFT (69 aa)).

The protein belongs to the polyribonucleotide nucleotidyltransferase family. In terms of assembly, component of the RNA degradosome, which is a multiprotein complex involved in RNA processing and mRNA degradation. Mg(2+) is required as a cofactor.

The protein localises to the cytoplasm. It catalyses the reaction RNA(n+1) + phosphate = RNA(n) + a ribonucleoside 5'-diphosphate. Its function is as follows. Involved in mRNA degradation. Catalyzes the phosphorolysis of single-stranded polyribonucleotides processively in the 3'- to 5'-direction. The sequence is that of Polyribonucleotide nucleotidyltransferase from Wigglesworthia glossinidia brevipalpis.